The sequence spans 171 residues: O-acetyl-ADP-ribose deacetylase 1 (171 aa).

The Macro domain occupies Met1–Asn171. Substrate is bound by residues Asp10 to Ile11, Asn24, Gly32 to Asp34, and Ser121 to Tyr125. Asp34 (proton acceptor) is an active-site residue.

It belongs to the MacroD-type family. YmdB subfamily. As to quaternary structure, homodimer. Interacts with RNase III.

The enzyme catalyses 3''-O-acetyl-ADP-D-ribose + H2O = ADP-D-ribose + acetate + H(+). The catalysed reaction is 2''-O-acetyl-ADP-D-ribose + H2O = ADP-D-ribose + acetate + H(+). In terms of biological role, deacetylates O-acetyl-ADP ribose to yield ADP-ribose and free acetate. Down-regulates ribonuclease 3 (RNase III) activity. Acts by interacting directly with the region of the ribonuclease that is required for dimerization/activation. In Pantoea vagans (strain C9-1) (Pantoea agglomerans (strain C9-1)), this protein is O-acetyl-ADP-ribose deacetylase 1.